Here is a 310-residue protein sequence, read N- to C-terminus: Olfactory receptor 9A2 (310 aa).

Residues Met-1–His-24 lie on the Extracellular side of the membrane. Residue Asn-4 is glycosylated (N-linked (GlcNAc...) asparagine). Residues Ile-25 to Ile-45 form a helical membrane-spanning segment. The Cytoplasmic portion of the chain corresponds to Val-46–Arg-53. Residues Leu-54 to Thr-74 form a helical membrane-spanning segment. The Extracellular segment spans residues Ile-75–Ser-98. At Asp-117–Ser-135 the chain is on the cytoplasmic side. A helical membrane pass occupies residues Thr-136–Ile-156. Residues Tyr-157–Phe-193 lie on the Extracellular side of the membrane. The helical transmembrane segment at Ile-194–Ser-213 threads the bilayer. Residues Tyr-214–Ala-233 lie on the Cytoplasmic side of the membrane. Residues Phe-234–Leu-254 traverse the membrane as a helical segment. At Tyr-255–Asn-267 the chain is on the extracellular side. The helical transmembrane segment at Lys-268–Leu-288 threads the bilayer. Residues Arg-289–Asp-310 are Cytoplasmic-facing.

This sequence belongs to the G-protein coupled receptor 1 family.

Its subcellular location is the cell membrane. In terms of biological role, odorant receptor. This chain is Olfactory receptor 9A2 (OR9A2), found in Homo sapiens (Human).